The chain runs to 341 residues: Protein CbhE (341 aa).

Residues 287–297 (IDEENTSDSSE) show a composition bias toward acidic residues. The interval 287-341 (IDEENTSDSSEEGTSKNRFRDTLFSNVPDSSSDSENEQEREKKELAGKTPSFRLC) is disordered. Positions 323–332 (EQEREKKELA) are enriched in basic and acidic residues.

It localises to the cytoplasm. May be involved in the pathogenesis of acute Q fever. The polypeptide is Protein CbhE (cbhE) (Coxiella burnetii (strain RSA 493 / Nine Mile phase I)).